The chain runs to 523 residues: Cytochrome P450 monooxygenase ple5B (523 aa).

The chain crosses the membrane as a helical span at residues 16–33 (IAAAAAGSAVAVYKLLQL). N-linked (GlcNAc...) asparagine glycans are attached at residues Asn-82, Asn-103, Asn-122, Asn-295, Asn-379, and Asn-423. Cys-446 is a heme binding site.

It belongs to the cytochrome P450 family. Heme is required as a cofactor.

It localises to the membrane. Its pathway is secondary metabolite biosynthesis; terpenoid biosynthesis. Cytochrome P450 monooxygenase; part of the gene cluster that mediates the biosynthesis of pleuromutilin, a tricyclic diterpene showing antibacterial properties. The geranylgeranyl diphosphate (GGPP) synthase ple4 catalyzes the first step in pleuromutilin biosynthesis. GGPP is then substrate of the premutilin synthase (PS) ple3 to yield premutilin. Premutilin synthase is a bifunctional enzyme composed of the fusion of a class II diterpene cyclase (DTC) and a class I diterpene synthase (DTS), with the corresponding domains and active sites containing characteristic aspartate-rich motifs. GGPP is first converted to mutildienyl-diphosphate (MPP) at the class II DTC site. MPP is subsequently further cyclized at the class I DTS site, followed by a 1,5-hydride shift and addition of water prior to terminating deprotonation, to yield premutilin. The cytochrome P450 monooxygenases ple5 and ple6 hydroxylate premutilin at C-11 and C-3, respectively, producing 11-hydroxypremutilin and 3-hydroxypremutilin. The combination of the actions of both ple5 and ple6 leads to the production of 3,11-dihydroxypremutilin. The short chain dehydrogenase ple7 further converts 3,11-dihydroxypremutilin into mutilin. The acetyltransferase ple2 then acetylates mutilin to produce 14-O-acetylmutilin. Finally, the cytochrome P450 monooxygenase ple1 catalyzes hydroxylation on the alpha position of the acetyl side chain of 14-O-acetylmutilin to yield pleuromutilin. This is Cytochrome P450 monooxygenase ple5B from Rhodocybe pseudopiperita (Clitopilus pseudopiperitus).